The sequence spans 92 residues: Small ribosomal subunit protein uS19 (92 aa).

A disordered region spans residues 73-92 (EFSPSRTYYGHAADKKAKRR).

The protein belongs to the universal ribosomal protein uS19 family.

Protein S19 forms a complex with S13 that binds strongly to the 16S ribosomal RNA. The polypeptide is Small ribosomal subunit protein uS19 (Maricaulis maris (strain MCS10) (Caulobacter maris)).